Consider the following 401-residue polypeptide: MSFDLASRLAARRAEDLYRQRPLLQSAQGPDVVVDGQPLLAFCSNDYLGLASHPEVIAALRAGAERWGVGGGASHLVVGHSGPHHELELALAEFTGRPRALLFSTGYMANLGAVTALVGKGDTVLEDRLNHASLLDAGLLSGARFSRYLHNDPASLAARLDKAEGNTLVVTDGVFSMDGNLADLPALAAVAQARGAWLMVDDAHGFGPLGAAGGGIVEHFGLGQEQVPVLIGTLGKGFGTAGAFVAGSEELIETLVQYARPYIYTTSQPPAVACATLKSLELLRRESWRREHLAALIARFRRGAEALGLTLMDSFTPIQPILVGGSRQAVALADMLRARGIMVGAIRPPTVPANSARLRVTLSAAHSEAQVDRLLEALGESWRQLSSSLLAEIEAEEGDDA.

Arg19 is a substrate binding site. 106–107 is a pyridoxal 5'-phosphate binding site; sequence GY. His131 is a substrate binding site. Pyridoxal 5'-phosphate is bound by residues Ser176, His204, and Thr233. Lys236 carries the post-translational modification N6-(pyridoxal phosphate)lysine. Thr350 lines the substrate pocket.

The protein belongs to the class-II pyridoxal-phosphate-dependent aminotransferase family. BioF subfamily. Homodimer. The cofactor is pyridoxal 5'-phosphate.

The enzyme catalyses 6-carboxyhexanoyl-[ACP] + L-alanine + H(+) = (8S)-8-amino-7-oxononanoate + holo-[ACP] + CO2. Its pathway is cofactor biosynthesis; biotin biosynthesis. Catalyzes the decarboxylative condensation of pimeloyl-[acyl-carrier protein] and L-alanine to produce 8-amino-7-oxononanoate (AON), [acyl-carrier protein], and carbon dioxide. This chain is 8-amino-7-oxononanoate synthase, found in Pseudomonas paraeruginosa (strain DSM 24068 / PA7) (Pseudomonas aeruginosa (strain PA7)).